Reading from the N-terminus, the 134-residue chain is Fluoride-specific ion channel FluC 3 (134 aa).

4 consecutive transmembrane segments (helical) span residues 4 to 24 (LIIL…FIML), 35 to 55 (MDIF…TSFF), 67 to 87 (MVGT…FGAV), and 100 to 120 (ICYL…GLMI). Na(+)-binding residues include Gly74 and Ser77.

The protein belongs to the fluoride channel Fluc/FEX (TC 1.A.43) family.

The protein localises to the cell inner membrane. It carries out the reaction fluoride(in) = fluoride(out). Its activity is regulated as follows. Na(+) is not transported, but it plays an essential structural role and its presence is essential for fluoride channel function. Fluoride-specific ion channel. Important for reducing fluoride concentration in the cell, thus reducing its toxicity. The chain is Fluoride-specific ion channel FluC 3 from Yersinia pseudotuberculosis serotype I (strain IP32953).